The sequence spans 341 residues: uncharacterized protein (341 aa).

This is an uncharacterized protein from Mycobacterium bovis (strain ATCC BAA-935 / AF2122/97).